A 181-amino-acid chain; its full sequence is Oligoribonuclease (181 aa).

The Exonuclease domain occupies Leu-8–Leu-171. Tyr-129 is a catalytic residue.

This sequence belongs to the oligoribonuclease family.

Its subcellular location is the cytoplasm. 3'-to-5' exoribonuclease specific for small oligoribonucleotides. The polypeptide is Oligoribonuclease (Nitrosomonas eutropha (strain DSM 101675 / C91 / Nm57)).